Consider the following 219-residue polypeptide: Aspartic protease inhibitor 10 (219 aa).

A signal peptide spans 1 to 23 (MMKCLFLLCLCLVPIVVFSSTFT). Positions 24–32 (SQNLIDLPS) are excised as a propeptide. Residues 26-31 (NLIDLP) carry the Vacuolar targeting signal motif. Asparagine 51 carries N-linked (GlcNAc...) asparagine glycosylation. Disulfide bonds link cysteine 80–cysteine 125 and cysteine 173–cysteine 184.

It belongs to the protease inhibitor I3 (leguminous Kunitz-type inhibitor) family. In tubers and green buds of untreated plants. After abscisic acid treatment or mechanical wounding is mostly accumulated in leaves, to a lesser extent in stems, but not in roots.

Functionally, inhibitor of cathepsin D (aspartic protease) and trypsin (serine protease). Protects the plant by inhibiting proteases of invading organisms. In Solanum tuberosum (Potato), this protein is Aspartic protease inhibitor 10 (CDI).